A 308-amino-acid polypeptide reads, in one-letter code: Reticulon-like protein 1 (308 aa).

2 stretches are compositionally biased toward polar residues: residues Met1–Ala17 and Pro41–Ile66. Disordered regions lie at residues Met1–Ala22 and Pro41–Ser92. N-linked (GlcNAc...) asparagine glycosylation is present at Asn65. Over residues Ser67–Pro81 the composition is skewed to low complexity. 2 N-linked (GlcNAc...) asparagine glycosylation sites follow: Asn113 and Asn135. Residues Leu127 to Lys308 form the Reticulon domain. A run of 4 helical transmembrane segments spans residues Cys138 to Leu158, Phe166 to Gly186, Pro233 to Leu253, and Tyr255 to Cys275. N-linked (GlcNAc...) asparagine glycosylation is present at Asn303.

Interacts with TTS1 and YOP1.

The protein localises to the endoplasmic reticulum membrane. The protein resides in the nucleus membrane. Its function is as follows. Required for the correct positioning of the cellular division plane by delimiting the actomyosin ring assembly at the cell equator. Overexpression causes cell lysis. The chain is Reticulon-like protein 1 (rtn1) from Schizosaccharomyces pombe (strain 972 / ATCC 24843) (Fission yeast).